The following is a 240-amino-acid chain: CRISPR-associated protein Cas5 3 (240 aa).

Belongs to the CRISPR-associated protein Cas5 family. Subtype I-A/Apern subfamily. As to quaternary structure, part of the aCascade ribonucleoprotein complex.

In terms of biological role, CRISPR (clustered regularly interspaced short palindromic repeat) is an adaptive immune system that provides protection against mobile genetic elements (viruses, transposable elements and conjugative plasmids). CRISPR clusters contain spacers, sequences complementary to antecedent mobile elements, and target invading nucleic acids. CRISPR clusters are transcribed and processed into CRISPR RNA (crRNA). This chain is CRISPR-associated protein Cas5 3 (cas5c), found in Saccharolobus solfataricus (strain ATCC 35092 / DSM 1617 / JCM 11322 / P2) (Sulfolobus solfataricus).